The following is a 167-amino-acid chain: Protein archease (167 aa).

An N-acetylalanine modification is found at A2. Ca(2+) contacts are provided by D39, D166, and I167.

It belongs to the archease family. Component of the tRNA-splicing ligase complex.

Functionally, component of the tRNA-splicing ligase complex required to facilitate the enzymatic turnover of catalytic subunit RTCB. Together with DDX1, acts by facilitating the guanylylation of RTCB, a key intermediate step in tRNA ligation. The protein is Protein archease (ZBTB8OS) of Bos taurus (Bovine).